The primary structure comprises 285 residues: 2-dehydro-3-deoxyphosphooctonate aldolase (285 aa).

The protein belongs to the KdsA family.

It localises to the cytoplasm. It catalyses the reaction D-arabinose 5-phosphate + phosphoenolpyruvate + H2O = 3-deoxy-alpha-D-manno-2-octulosonate-8-phosphate + phosphate. Its pathway is carbohydrate biosynthesis; 3-deoxy-D-manno-octulosonate biosynthesis; 3-deoxy-D-manno-octulosonate from D-ribulose 5-phosphate: step 2/3. It functions in the pathway bacterial outer membrane biogenesis; lipopolysaccharide biosynthesis. In Acidovorax ebreus (strain TPSY) (Diaphorobacter sp. (strain TPSY)), this protein is 2-dehydro-3-deoxyphosphooctonate aldolase.